Here is a 352-residue protein sequence, read N- to C-terminus: MSANKKPVTTPLHLLQQLSHSLVEHLEGACKQALVDSEKLLAKLEKQRGKAQEKLHKARTKLQDAAKAGKTKAQAKARETISDLEEALDTLKARQADTRTYIVGLKRDVQESLKLAQGVGKVKEAAGKALESRKAKPATKPAAKAAAKPAVKTVAAKPAAKPAAKPAAKPAAKPAAKTAAAKPAAKPTAKPAAKPAAKPAAKTAAAKPAAKPAAKPVAKPAAKPAAKTAAAKPAAKPAAKPVAKPTAKPAAKTAAAKPAAKPAAKPAAKPAAKPVAKSAAAKPAAKPAAKPAAKPAAKPAAKPVAAKPAATKPATAPAAKPAATPSAPAAASSAASATPAAGSNGAAPTSAS.

Residues 128-352 are disordered; that stretch reads KALESRKAKP…SNGAAPTSAS (225 aa). A compositionally biased stretch (low complexity) spans 138–341; it reads ATKPAAKAAA…SSAASATPAA (204 aa).

The promoter for a critical alginate biosynthetic gene, AlgD, encoding GDP-mannose dehydrogenase, is activated only under conditions reminiscent of the cystic fibrosis lung (i.e. under high osmolarity), and at least two regulatory genes, AlgP and AlgQ, have been implicated in this activation process. This Pseudomonas aeruginosa (strain ATCC 15692 / DSM 22644 / CIP 104116 / JCM 14847 / LMG 12228 / 1C / PRS 101 / PAO1) protein is Transcriptional regulatory protein AlgP (algP).